A 282-amino-acid polypeptide reads, in one-letter code: uncharacterized protein (282 aa).

The active-site Proton donor is the Tyr-50. His-115 is a binding site for substrate.

It belongs to the aldo/keto reductase family.

This is an uncharacterized protein from Saccharomyces cerevisiae (strain ATCC 204508 / S288c) (Baker's yeast).